Here is a 419-residue protein sequence, read N- to C-terminus: Gamma-glutamyl phosphate reductase (419 aa).

It belongs to the gamma-glutamyl phosphate reductase family.

It localises to the cytoplasm. It carries out the reaction L-glutamate 5-semialdehyde + phosphate + NADP(+) = L-glutamyl 5-phosphate + NADPH + H(+). It participates in amino-acid biosynthesis; L-proline biosynthesis; L-glutamate 5-semialdehyde from L-glutamate: step 2/2. Functionally, catalyzes the NADPH-dependent reduction of L-glutamate 5-phosphate into L-glutamate 5-semialdehyde and phosphate. The product spontaneously undergoes cyclization to form 1-pyrroline-5-carboxylate. The sequence is that of Gamma-glutamyl phosphate reductase from Syntrophomonas wolfei subsp. wolfei (strain DSM 2245B / Goettingen).